The chain runs to 197 residues: Xanthine phosphoribosyltransferase (197 aa).

The xanthine site is built by leucine 20 and asparagine 27. 128–132 (ANGQA) contributes to the 5-phospho-alpha-D-ribose 1-diphosphate binding site. Lysine 156 provides a ligand contact to xanthine.

The protein belongs to the purine/pyrimidine phosphoribosyltransferase family. Xpt subfamily. As to quaternary structure, homodimer.

The protein resides in the cytoplasm. The enzyme catalyses XMP + diphosphate = xanthine + 5-phospho-alpha-D-ribose 1-diphosphate. The protein operates within purine metabolism; XMP biosynthesis via salvage pathway; XMP from xanthine: step 1/1. Functionally, converts the preformed base xanthine, a product of nucleic acid breakdown, to xanthosine 5'-monophosphate (XMP), so it can be reused for RNA or DNA synthesis. This is Xanthine phosphoribosyltransferase from Bacillus cereus (strain B4264).